The primary structure comprises 504 residues: Cytochrome P450 4A24 (504 aa).

Transmembrane regions (helical) follow at residues 6-26 (LASASGLLQVASLLGLLLLLL) and 112-132 (VVYRLLIPWIGCGLLLLNGQT). Position 451 (Cys451) interacts with heme.

It belongs to the cytochrome P450 family. The cofactor is heme.

Its subcellular location is the endoplasmic reticulum membrane. It carries out the reaction an omega-methyl-long-chain fatty acid + reduced [NADPH--hemoprotein reductase] + O2 = an omega-hydroxy-long-chain fatty acid + oxidized [NADPH--hemoprotein reductase] + H2O + H(+). Catalyzes the omega- and (omega-1)-hydroxylation of various fatty acids such as laurate and palmitate. Has no activity toward taurochenodeoxycholic acid. The protein is Cytochrome P450 4A24 (CYP4A24) of Sus scrofa (Pig).